A 322-amino-acid polypeptide reads, in one-letter code: MDVMTLAAIPSPPQGVWYLGPLPIRAYAMCIIAGIIVAIWLTRKRYAARGGNPEVVLDAAIVAVPAGIIGGRIYHVITDNQKYFCETCDPVDALKITNGGLGIWGAVILGGLAVWAYFRYKKIPLAPFADAVAPGVILAQAIGRLGNWFNQELYGAETDVPWALEIYYRVDENGRFAPVTGVSTGEVIATVHPTFLYEMLWNLLIFGLLIWADRRFRLGHGRVFALYVAGYTLGRFWIEQMRTDEATMVFGMRINTLVSAVVFILAVIVFLRLGKGREAPAEVDPAYHAAQAERDDTETAGLDATTGTVPGDSPETTGKKRK.

4 helical membrane passes run 21 to 41 (PLPI…AIWL), 50 to 70 (GGNP…GIIG), 98 to 118 (NGGL…WAYF), and 123 to 143 (IPLA…QAIG). Arg144 lines the a 1,2-diacyl-sn-glycero-3-phospho-(1'-sn-glycerol) pocket. The next 2 membrane-spanning stretches (helical) occupy residues 191-211 (VHPT…LLIW) and 254-274 (INTL…LRLG). Residues 283–322 (VDPAYHAAQAERDDTETAGLDATTGTVPGDSPETTGKKRK) form a disordered region.

This sequence belongs to the Lgt family.

The protein localises to the cell membrane. The enzyme catalyses L-cysteinyl-[prolipoprotein] + a 1,2-diacyl-sn-glycero-3-phospho-(1'-sn-glycerol) = an S-1,2-diacyl-sn-glyceryl-L-cysteinyl-[prolipoprotein] + sn-glycerol 1-phosphate + H(+). It participates in protein modification; lipoprotein biosynthesis (diacylglyceryl transfer). Catalyzes the transfer of the diacylglyceryl group from phosphatidylglycerol to the sulfhydryl group of the N-terminal cysteine of a prolipoprotein, the first step in the formation of mature lipoproteins. In Corynebacterium efficiens (strain DSM 44549 / YS-314 / AJ 12310 / JCM 11189 / NBRC 100395), this protein is Phosphatidylglycerol--prolipoprotein diacylglyceryl transferase.